Here is a 478-residue protein sequence, read N- to C-terminus: Melanopsin (478 aa).

Over residues 1-14 (MNPPSGPRVPPSPT) the composition is skewed to pro residues. Residues 1 to 32 (MNPPSGPRVPPSPTQEPSCMATPAPPSWWDSS) form a disordered region. At 1-72 (MNPPSGPRVP…VDVPDHAHYT (72 aa)) the chain is on the extracellular side. The helical transmembrane segment at 73–93 (LGTVILLVGLTGMLGNLTVIY) threads the bilayer. Residues 94–107 (TFCRSRSLRTPANM) are Cytoplasmic-facing. A helical membrane pass occupies residues 108 to 128 (FIINLAVSDFLMSFTQAPVFF). At 129 to 144 (TSSLYKQWLFGETGCE) the chain is on the extracellular side. Residues cysteine 143 and cysteine 221 are joined by a disulfide bond. The chain crosses the membrane as a helical span at residues 145–165 (FYAFCGALFGISSMITLTAIA). Topologically, residues 166–188 (LDRYLVITRPLATFGVASKRRAA) are cytoplasmic. Residues 189–209 (FVLLGVWLYALAWSLPPFFGW) traverse the membrane as a helical segment. Over 210 to 238 (SAYVPEGLLTSCSWDYMSFTPAVRAYTML) the chain is Extracellular. Residues 239–259 (LCCFVFFLPLLIIIYCYIFIF) traverse the membrane as a helical segment. Topologically, residues 260–296 (RAIRETGRALQTFGACKGNGESLWQRQRLQSECKMAK) are cytoplasmic. A helical transmembrane segment spans residues 297–317 (IMLLVILLFVLSWAPYSAVAL). Residues 318–332 (VAFAGYAHVLTPYMS) lie on the Extracellular side of the membrane. Residues 333 to 353 (SVPAVIAKASAIHNPIIYAIT) traverse the membrane as a helical segment. An N6-(retinylidene)lysine modification is found at lysine 340. Residues 354–478 (HPKYRVAIAQ…GLIPSQDPRM (125 aa)) lie on the Cytoplasmic side of the membrane. A disordered region spans residues 440-478 (LYGQGLEDLEAKAPPRPQGHEAETPGKTKGLIPSQDPRM). Positions 448-465 (LEAKAPPRPQGHEAETPG) are enriched in basic and acidic residues.

It belongs to the G-protein coupled receptor 1 family. Opsin subfamily. As to expression, expressed in the retina.

The protein localises to the cell membrane. It localises to the cell projection. It is found in the axon. The protein resides in the dendrite. Its subcellular location is the perikaryon. In terms of biological role, photoreceptor that binds cis-retinaldehydes. Contributes to pupillar reflex, photoentrainment and other non-image forming responses to light. May be involved in the optokinetic visual tracking response. May be involved in the regulation of retinal hyaloid vessel growth and regression. This chain is Melanopsin (OPN4), found in Homo sapiens (Human).